A 363-amino-acid chain; its full sequence is NAD(P)H-quinone oxidoreductase subunit 1, chloroplastic (363 aa).

The next 6 helical transmembrane spans lie at Leu30–Leu50, Ile104–Leu124, Leu127–Met147, Tyr248–Ser268, Val300–Ile320, and Phe343–Leu363.

The protein belongs to the complex I subunit 1 family. NDH is composed of at least 16 different subunits, 5 of which are encoded in the nucleus.

Its subcellular location is the plastid. It localises to the chloroplast thylakoid membrane. It catalyses the reaction a plastoquinone + NADH + (n+1) H(+)(in) = a plastoquinol + NAD(+) + n H(+)(out). It carries out the reaction a plastoquinone + NADPH + (n+1) H(+)(in) = a plastoquinol + NADP(+) + n H(+)(out). In terms of biological role, NDH shuttles electrons from NAD(P)H:plastoquinone, via FMN and iron-sulfur (Fe-S) centers, to quinones in the photosynthetic chain and possibly in a chloroplast respiratory chain. The immediate electron acceptor for the enzyme in this species is believed to be plastoquinone. Couples the redox reaction to proton translocation, and thus conserves the redox energy in a proton gradient. The polypeptide is NAD(P)H-quinone oxidoreductase subunit 1, chloroplastic (Lactuca sativa (Garden lettuce)).